Here is a 423-residue protein sequence, read N- to C-terminus: Serine hydroxymethyltransferase (423 aa).

(6S)-5,6,7,8-tetrahydrofolate is bound by residues Leu120 and 124–126 (GHL). Lys229 is modified (N6-(pyridoxal phosphate)lysine). (6S)-5,6,7,8-tetrahydrofolate is bound at residue 353-355 (SPF).

This sequence belongs to the SHMT family. As to quaternary structure, homodimer. Pyridoxal 5'-phosphate is required as a cofactor.

It localises to the cytoplasm. The enzyme catalyses (6R)-5,10-methylene-5,6,7,8-tetrahydrofolate + glycine + H2O = (6S)-5,6,7,8-tetrahydrofolate + L-serine. The protein operates within one-carbon metabolism; tetrahydrofolate interconversion. Its pathway is amino-acid biosynthesis; glycine biosynthesis; glycine from L-serine: step 1/1. Catalyzes the reversible interconversion of serine and glycine with tetrahydrofolate (THF) serving as the one-carbon carrier. This reaction serves as the major source of one-carbon groups required for the biosynthesis of purines, thymidylate, methionine, and other important biomolecules. Also exhibits THF-independent aldolase activity toward beta-hydroxyamino acids, producing glycine and aldehydes, via a retro-aldol mechanism. This chain is Serine hydroxymethyltransferase, found in Prochlorococcus marinus (strain AS9601).